A 738-amino-acid polypeptide reads, in one-letter code: Envelope glycoprotein gp160 (738 aa).

The signal sequence occupies residues 1–21; the sequence is MCGKSLLCVASLLASAYLVYC. At 22–670 the chain is on the extracellular side; it reads TQYVTVFYGV…LTSWIKYIQY (649 aa). A glycan (N-linked (GlcNAc...) asparagine; by host) is linked at Asn-36. A disulfide bond links Cys-43 and Cys-56. N-linked (GlcNAc...) asparagine; by host glycosylation is found at Asn-69, Asn-113, Asn-117, Asn-118, Asn-132, Asn-141, Asn-169, Asn-182, Asn-197, Asn-229, Asn-232, Asn-263, Asn-269, Asn-280, Asn-291, Asn-301, Asn-356, Asn-362, Asn-389, Asn-402, Asn-439, Asn-454, and Asn-457. Disulfide bonds link Cys-100–Cys-205, Cys-107–Cys-196, Cys-112–Cys-153, Cys-218–Cys-248, and Cys-228–Cys-240. The tract at residues 112 to 152 is V1; it reads CNSTTNNTTTTGSTTGMSEINETSPSYSDNCTGLGKEEIVN. The segment at 153–196 is V2; that stretch reads CQFYMTGLERDKKKQYNETWYSKDVVCESNNTKDGKNRCYMNHC. The tract at residues 296–328 is V3; the sequence is CKRPGNKTVVPITLMSGLVFHSQPINTRPRQAW. Cys-296 and Cys-329 are oxidised to a cystine. 2 cysteine pairs are disulfide-bonded: Cys-381–Cys-438 and Cys-388–Cys-411. The V4 stretch occupies residues 388–411; sequence CNMTWFLNWVENRPNQTQHNYAPC. Positions 454 to 460 are V5; sequence NQTNITF. The tract at residues 503-523 is fusion peptide; the sequence is GVFVLGFLGFLATAGSAMGAA. Positions 566–582 are immunosuppression; it reads LQARVTAIEKYLKDQAQ. N-linked (GlcNAc...) asparagine; by host glycosylation is found at Asn-602, Asn-611, and Asn-627. Residues 615–636 are a coiled coil; that stretch reads QEWEKQVRYLEANISQSLEQAQ. Residues 648-669 form an MPER; binding to GalCer region; that stretch reads KLNSWDVFGNWFDLTSWIKYIQ. The helical transmembrane segment at 671 to 691 threads the bilayer; the sequence is GVYIVVGVIVLRIAIYIVQLL. Topologically, residues 692-738 are cytoplasmic; it reads SRLRKGYRPVFSSPPGYLQQIHIHTDRGQPANEGTEEDDRDDDGYDL. The YXXV motif; contains endocytosis signal signature appears at 698–701; it reads YRPV. Residues 716–738 form a disordered region; it reads TDRGQPANEGTEEDDRDDDGYDL. Residues 725–738 show a composition bias toward acidic residues; it reads GTEEDDRDDDGYDL.

As to quaternary structure, the mature envelope protein (Env) consists of a homotrimer of non-covalently associated gp120-gp41 heterodimers. The resulting complex protrudes from the virus surface as a spike. There seems to be as few as 10 spikes on the average virion. Interacts with human CD4, CCR5 and CXCR4, to form a P4HB/PDI-CD4-CXCR4-gp120 complex. Gp120 also interacts with the C-type lectins CD209/DC-SIGN and CLEC4M/DC-SIGNR (collectively referred to as DC-SIGN(R)). Gp120 and gp41 interact with GalCer. In terms of assembly, the mature envelope protein (Env) consists of a homotrimer of non-covalently associated gp120-gp41 heterodimers. The resulting complex protrudes from the virus surface as a spike. There seems to be as few as 10 spikes on the average virion. Specific enzymatic cleavages in vivo yield mature proteins. Envelope glycoproteins are synthesized as an inactive precursor that is heavily N-glycosylated and processed likely by host cell furin in the Golgi to yield the mature SU and TM proteins. The cleavage site between SU and TM requires the minimal sequence [KR]-X-[KR]-R. In terms of processing, palmitoylation of the transmembrane protein and of Env polyprotein (prior to its proteolytic cleavage) is essential for their association with host cell membrane lipid rafts. Palmitoylation is therefore required for envelope trafficking to classical lipid rafts, but not for viral replication.

The protein localises to the virion membrane. It is found in the host cell membrane. It localises to the host endosome membrane. Its function is as follows. The surface protein gp120 (SU) attaches the virus to the host lymphoid cell by binding to the primary receptor CD4. This interaction induces a structural rearrangement creating a high affinity binding site for a chemokine coreceptor like CXCR4 and/or CCR5. This peculiar 2 stage receptor-interaction strategy allows gp120 to maintain the highly conserved coreceptor-binding site in a cryptic conformation, protected from neutralizing antibodies. Since CD4 also displays a binding site for the disulfide-isomerase P4HB/PDI, a P4HB/PDI-CD4-CXCR4-gp120 complex may form. In that complex, P4HB/PDI could reach and reduce gp120 disulfide bonds, causing major conformational changes in gp120. TXN, another PDI family member could also be involved in disulfide rearrangements in Env during fusion. These changes are transmitted to the transmembrane protein gp41 and are thought to activate its fusogenic potential by unmasking its fusion peptide. Functionally, the surface protein gp120 is a ligand for CD209/DC-SIGN and CLEC4M/DC-SIGNR, which are respectively found on dendritic cells (DCs), and on endothelial cells of liver sinusoids and lymph node sinuses. These interactions allow capture of viral particles at mucosal surfaces by these cells and subsequent transmission to permissive cells. DCs are professional antigen presenting cells, critical for host immunity by inducing specific immune responses against a broad variety of pathogens. They act as sentinels in various tissues where they take up antigen, process it, and present it to T-cells following migration to lymphoid organs. HIV subverts the migration properties of dendritic cells to gain access to CD4+ T-cells in lymph nodes. Virus transmission to permissive T-cells occurs either in trans (without DCs infection, through viral capture and transmission), or in cis (following DCs productive infection, through the usual CD4-gp120 interaction), thereby inducing a robust infection. In trans infection, bound virions remain infectious over days and it is proposed that they are not degraded, but protected in non-lysosomal acidic organelles within the DCs close to the cell membrane thus contributing to the viral infectious potential during DCs' migration from the periphery to the lymphoid tissues. On arrival at lymphoid tissues, intact virions recycle back to DCs' cell surface allowing virus transmission to CD4+ T-cells. Virion capture also seems to lead to MHC-II-restricted viral antigen presentation, and probably to the activation of HIV-specific CD4+ cells. In terms of biological role, the transmembrane protein gp41 (TM) acts as a class I viral fusion protein. Under the current model, the protein has at least 3 conformational states: pre-fusion native state, pre-hairpin intermediate state, and post-fusion hairpin state. During fusion of viral and target intracellular membranes, the coiled coil regions (heptad repeats) assume a trimer-of-hairpins structure, positioning the fusion peptide in close proximity to the C-terminal region of the ectodomain. The formation of this structure appears to drive apposition and subsequent fusion of viral and target cell membranes. Complete fusion occurs in host cell endosomes and is dynamin-dependent, however some lipid transfer might occur at the plasma membrane. The virus undergoes clathrin-dependent internalization long before endosomal fusion, thus minimizing the surface exposure of conserved viral epitopes during fusion and reducing the efficacy of inhibitors targeting these epitopes. Membranes fusion leads to delivery of the nucleocapsid into the cytoplasm. The envelope glycoprotein gp160 precursor down-modulates cell surface CD4 antigen by interacting with it in the endoplasmic reticulum and blocking its transport to the cell surface. Its function is as follows. The gp120-gp41 heterodimer seems to contribute to T-cell depletion during HIV-1 infection. The envelope glycoproteins expressed on the surface of infected cells induce apoptosis through an interaction with uninfected cells expressing the receptor (CD4) and the coreceptors CXCR4 or CCR5. This type of bystander killing may be obtained by at least three distinct mechanisms. First, the interaction between the 2 cells can induce cellular fusion followed by nuclear fusion within the syncytium. Syncytia are condemned to die from apoptosis. Second, the 2 interacting cells may not fuse entirely and simply exchange plasma membrane lipids, after a sort of hemifusion process, followed by rapid death. Third, it is possible that virus-infected cells, on the point of undergoing apoptosis, fuse with CD4-expressing cells, in which case apoptosis is rapidly transmitted from one cell to the other and thus occurs in a sort of contagious fashion. Functionally, the gp120-gp41 heterodimer allows rapid transcytosis of the virus through CD4 negative cells such as simple epithelial monolayers of the intestinal, rectal and endocervical epithelial barriers. Both gp120 and gp41 specifically recognize glycosphingolipids galactosyl-ceramide (GalCer) or 3' sulfo-galactosyl-ceramide (GalS) present in the lipid rafts structures of epithelial cells. Binding to these alternative receptors allows the rapid transcytosis of the virus through the epithelial cells. This transcytotic vesicle-mediated transport of virions from the apical side to the basolateral side of the epithelial cells does not involve infection of the cells themselves. This is Envelope glycoprotein gp160 (env) from Human immunodeficiency virus type 2 subtype A (isolate Ghana-1) (HIV-2).